A 232-amino-acid polypeptide reads, in one-letter code: Enolase-phosphatase E1 (232 aa).

The protein belongs to the HAD-like hydrolase superfamily. MasA/MtnC family. Monomer. The cofactor is Mg(2+).

The catalysed reaction is 5-methylsulfanyl-2,3-dioxopentyl phosphate + H2O = 1,2-dihydroxy-5-(methylsulfanyl)pent-1-en-3-one + phosphate. It functions in the pathway amino-acid biosynthesis; L-methionine biosynthesis via salvage pathway; L-methionine from S-methyl-5-thio-alpha-D-ribose 1-phosphate: step 3/6. The protein operates within amino-acid biosynthesis; L-methionine biosynthesis via salvage pathway; L-methionine from S-methyl-5-thio-alpha-D-ribose 1-phosphate: step 4/6. Its function is as follows. Bifunctional enzyme that catalyzes the enolization of 2,3-diketo-5-methylthiopentyl-1-phosphate (DK-MTP-1-P) into the intermediate 2-hydroxy-3-keto-5-methylthiopentenyl-1-phosphate (HK-MTPenyl-1-P), which is then dephosphorylated to form the acireductone 1,2-dihydroxy-3-keto-5-methylthiopentene (DHK-MTPene). The chain is Enolase-phosphatase E1 from Xylella fastidiosa (strain M12).